Here is a 216-residue protein sequence, read N- to C-terminus: 4-hydroxy-tetrahydrodipicolinate reductase (216 aa).

NAD(+) contacts are provided by residues Gly7–Met12, Gly71–Thr73, and Ala95–Phe98. His127 (proton donor/acceptor) is an active-site residue. His128 is a (S)-2,3,4,5-tetrahydrodipicolinate binding site. Catalysis depends on Lys131, which acts as the Proton donor. A (S)-2,3,4,5-tetrahydrodipicolinate-binding site is contributed by Gly137 to Thr138.

It belongs to the DapB family.

It is found in the cytoplasm. The catalysed reaction is (S)-2,3,4,5-tetrahydrodipicolinate + NAD(+) + H2O = (2S,4S)-4-hydroxy-2,3,4,5-tetrahydrodipicolinate + NADH + H(+). It carries out the reaction (S)-2,3,4,5-tetrahydrodipicolinate + NADP(+) + H2O = (2S,4S)-4-hydroxy-2,3,4,5-tetrahydrodipicolinate + NADPH + H(+). Its pathway is amino-acid biosynthesis; L-lysine biosynthesis via DAP pathway; (S)-tetrahydrodipicolinate from L-aspartate: step 4/4. Functionally, catalyzes the conversion of 4-hydroxy-tetrahydrodipicolinate (HTPA) to tetrahydrodipicolinate. This is 4-hydroxy-tetrahydrodipicolinate reductase from Thermotoga sp. (strain RQ2).